Here is a 66-residue protein sequence, read N- to C-terminus: uncharacterized protein (66 aa).

This is an uncharacterized protein from Saccharomyces cerevisiae (strain ATCC 204508 / S288c) (Baker's yeast).